A 267-amino-acid chain; its full sequence is Apolipoprotein A-I (267 aa).

The first 18 residues, 1–18 (MKAAVLTLAVLFLTGSQA), serve as a signal peptide directing secretion. 2 tandem repeats follow at residues 68 to 89 (LKLL…EQLG) and 90 to 111 (PVTQ…QEMS). The tract at residues 68-267 (LKLLDNWDSV…EEYTKKLNTQ (200 aa)) is 10 X approximate tandem repeats. The residue at position 110 (Met110) is a Methionine sulfoxide. One copy of the 3; half-length repeat lies at 112–122 (KDLEEVKAKVQ). 5 tandem repeats follow at residues 123 to 144 (PYLD…QKVE), 145 to 166 (PLRA…EKLS), 167 to 188 (PLGE…THLA), 189 to 210 (PYSD…ENGG), and 211 to 232 (ARLA…EKAK). The residue at position 136 (Met136) is a Methionine sulfoxide. A 9; half-length repeat occupies 233–243 (PALEDLRQGLL). Copy 10 of the repeat occupies 244–267 (PVLESFKVSFLSALEEYTKKLNTQ).

It belongs to the apolipoprotein A1/A4/E family. As to quaternary structure, homodimer. Interacts with APOA1BP and CLU. Component of a sperm activating protein complex (SPAP), consisting of APOA1, an immunoglobulin heavy chain, an immunoglobulin light chain and albumin. Interacts with NDRG1. Interacts with SCGB3A2. Interacts with NAXE and YJEFN3. In terms of processing, glycosylated. Post-translationally, palmitoylated. Phosphorylation sites are present in the extracellular medium. Major protein of plasma HDL, also found in chylomicrons.

It localises to the secreted. Functionally, participates in the reverse transport of cholesterol from tissues to the liver for excretion by promoting cholesterol efflux from tissues and by acting as a cofactor for the lecithin cholesterol acyltransferase (LCAT). As part of the SPAP complex, activates spermatozoa motility. The protein is Apolipoprotein A-I (APOA1) of Pan paniscus (Pygmy chimpanzee).